A 610-amino-acid chain; its full sequence is Elongation factor 4 (610 aa).

One can recognise a tr-type G domain in the interval 7-189 (SRIRNFSIIA…AIVQRIPPPK (183 aa)). GTP is bound by residues 19–24 (DHGKST) and 136–139 (NKID).

The protein belongs to the TRAFAC class translation factor GTPase superfamily. Classic translation factor GTPase family. LepA subfamily.

It localises to the cell inner membrane. The enzyme catalyses GTP + H2O = GDP + phosphate + H(+). Required for accurate and efficient protein synthesis under certain stress conditions. May act as a fidelity factor of the translation reaction, by catalyzing a one-codon backward translocation of tRNAs on improperly translocated ribosomes. Back-translocation proceeds from a post-translocation (POST) complex to a pre-translocation (PRE) complex, thus giving elongation factor G a second chance to translocate the tRNAs correctly. Binds to ribosomes in a GTP-dependent manner. The chain is Elongation factor 4 from Thermus thermophilus (strain ATCC 27634 / DSM 579 / HB8).